The primary structure comprises 456 residues: Protein disulfide-isomerase TMX3 (456 aa).

Positions 1-29 (MANAVGRRSWAALRLCAAVILLDLAVCKG) are cleaved as a signal peptide. Residues 30 to 131 (FVEDLNESFK…KDDIIEFAHR (102 aa)) form the Thioredoxin domain. The Lumenal segment spans residues 30 to 378 (FVEDLNESFK…TIVSIFKSSP (349 aa)). Asn-35 is a glycosylation site (N-linked (GlcNAc...) asparagine). Active-site nucleophile residues include Cys-56 and Cys-59. Residues Cys-56 and Cys-59 are joined by a disulfide bond. Residues Asn-261 and Asn-316 are each glycosylated (N-linked (GlcNAc...) asparagine). Residues 379–399 (LMGCFLFGLPLGVISIMCYGI) traverse the membrane as a helical segment. The Cytoplasmic segment spans residues 400 to 456 (YTADTDGGYIEERYEVSKSEMENQEQIEESKEQESSSGGSLAPTVQEPKDVLEKKKD). The segment at 416–456 (SKSEMENQEQIEESKEQESSSGGSLAPTVQEPKDVLEKKKD) is disordered. Residues 446–456 (EPKDVLEKKKD) are compositionally biased toward basic and acidic residues. Residues 453 to 456 (KKKD) carry the Di-lysine motif motif.

Belongs to the protein disulfide isomerase family.

It localises to the endoplasmic reticulum membrane. The catalysed reaction is Catalyzes the rearrangement of -S-S- bonds in proteins.. In terms of biological role, probable disulfide isomerase, which participates in the folding of proteins containing disulfide bonds. May act as a dithiol oxidase. Acts as a regulator of endoplasmic reticulum-mitochondria contact sites via its ability to regulate redox signals. The protein is Protein disulfide-isomerase TMX3 (Tmx3) of Mus musculus (Mouse).